The following is a 279-amino-acid chain: Monoacylglycerol lipase (279 aa).

Catalysis depends on Ser-110, which acts as the Nucleophile. Residues Asp-226 and His-256 each act as charge relay system in the active site.

This sequence belongs to the AB hydrolase superfamily. In terms of assembly, monomer.

Its subcellular location is the secreted. It localises to the cell wall. It carries out the reaction a 1-acylglycerol + H2O = glycerol + a fatty acid + H(+). It catalyses the reaction Hydrolyzes glycerol monoesters of long-chain fatty acids.. The catalysed reaction is 1-butyrylglycerol + H2O = butanoate + glycerol + H(+). The enzyme catalyses 1-octanoylglycerol + H2O = octanoate + glycerol + H(+). It carries out the reaction 1-decanoylglycerol + H2O = decanoate + glycerol + H(+). It catalyses the reaction 1-dodecanoylglycerol + H2O = dodecanoate + glycerol + H(+). The catalysed reaction is 1-tetradecanoylglycerol + H2O = tetradecanoate + glycerol + H(+). The enzyme catalyses 1-(9Z-octadecenoyl)-glycerol + H2O = glycerol + (9Z)-octadecenoate + H(+). It carries out the reaction 2-(9Z-octadecenoyl)-glycerol + H2O = glycerol + (9Z)-octadecenoate + H(+). With respect to regulation, inhibited by the serine esterase inhibitors PMSF (100%), E600 (80%) and THL (22%). Virtual screening identified a tautomer of ZINC13451138, known inhibitor for HIV-1 integrase, as a potential inhibitor. Involved in the hydrolysis of exogenous host lipids during chronic infection. Catalyzes the hydrolysis of both monoacylglycerols (MAG) and diacylglycerols (DAG), with a preference for MAG. It hydrolyzes 2-MAG, 1-3-MAG and MAG with short, medium and long chain fatty acids such as 1-monobutyroyl-rac-glycerol (MC4), 1-mono-octanoyl-rac-glycerol (MC8), 1-monodecanoyl-rac-glycerol (MC10), 1-monolauroyl-rac-glycerol (MC12), 1-monomyristoyl-rac-glycerol (MC14) and 1-mono-oleyl-rac-glycerol (MC18:1). Also able to hydrolyze DAG with short (DiC6) and medium (DiC10) fatty acid chains, but not with longest fatty acid chains. Can also hydrolyze vinyl laurate (VC12), vinyl butyrate (VC4) and vinyl propionate (VC3). Functionally, induces an inflammatory response and cell apoptosis in the host cells. Increases expression of IL-6, NF-kappaB, TLR-2, TLR-6, TNF-alpha, and MyD88 in mouse alveolar macrophage RAW264.7 cells. Persistent expression induces RAW264.7 cell apoptosis in vitro. The protein is Monoacylglycerol lipase of Mycobacterium tuberculosis (strain ATCC 25618 / H37Rv).